The primary structure comprises 572 residues: NADH-ubiquinone oxidoreductase chain 5 (572 aa).

A run of 17 helical transmembrane segments spans residues Phe-6–Ile-26, Val-44–Ile-64, Ile-86–Ile-106, Ser-107–Gln-127, Val-147–Tyr-167, Ile-179–Leu-201, Pro-208–Arg-230, Met-234–Met-254, Ile-268–Tyr-288, Leu-291–Gly-311, Ser-337–Tyr-357, Asn-372–Phe-394, Ile-422–Val-442, Phe-454–Val-474, Leu-479–Phe-499, Trp-524–Ile-544, and Phe-552–Leu-572.

Belongs to the complex I subunit 5 family.

The protein resides in the mitochondrion inner membrane. It catalyses the reaction a ubiquinone + NADH + 5 H(+)(in) = a ubiquinol + NAD(+) + 4 H(+)(out). Its function is as follows. Core subunit of the mitochondrial membrane respiratory chain NADH dehydrogenase (Complex I) that is believed to belong to the minimal assembly required for catalysis. Complex I functions in the transfer of electrons from NADH to the respiratory chain. The immediate electron acceptor for the enzyme is believed to be ubiquinone. This Locusta migratoria (Migratory locust) protein is NADH-ubiquinone oxidoreductase chain 5 (ND5).